The sequence spans 112 residues: Notch-regulated ankyrin repeat-containing protein A (112 aa).

2 ANK repeats span residues 48–77 and 81–110; these read EGQTALHQSVIDGNLELVKLLVKFGADIRL and EGWSALHIAAFGGHQDIVLYLITKAKYSSG.

The protein belongs to the NRARP family.

Regulates independently canonical Wnt and Notch signaling by modulating LEF1 and Notch protein turnover. Stabilizes LEF1, a pivotal transcription factor in the Wnt signaling cascade, by blocking its ubiquitination. Involved in angiogenesis; involved in intersegmental vessel patterning during development. This Danio rerio (Zebrafish) protein is Notch-regulated ankyrin repeat-containing protein A (nrarpa).